A 142-amino-acid polypeptide reads, in one-letter code: MAVQQNVKKGGREAGGDLIVGKHVYGNLYGVDEEKLWDEELLKDIVVEAARVANMNLVDIKTWKFTGFHGGVSVIALVLESHISIHTWPDYGYATVDVYTCGANSDPWKAFNYIVLKLKPRYYIVHYADRSSIPGYTESEKR.

Ser-81 serves as the catalytic Schiff-base intermediate with substrate; via pyruvic acid. Position 81 is a pyruvic acid (Ser); by autocatalysis (Ser-81). His-86 (proton acceptor; for processing activity) is an active-site residue. Cys-101 (proton donor; for catalytic activity) is an active-site residue.

It belongs to the prokaryotic AdoMetDC family. Type 1 subfamily. Heterooctamer of four alpha and four beta chains arranged as a tetramer of alpha/beta heterodimers. The cofactor is pyruvate. Is synthesized initially as an inactive proenzyme. Formation of the active enzyme involves a self-maturation process in which the active site pyruvoyl group is generated from an internal serine residue via an autocatalytic post-translational modification. Two non-identical subunits are generated from the proenzyme in this reaction, and the pyruvate is formed at the N-terminus of the alpha chain, which is derived from the carboxyl end of the proenzyme. The post-translation cleavage follows an unusual pathway, termed non-hydrolytic serinolysis, in which the side chain hydroxyl group of the serine supplies its oxygen atom to form the C-terminus of the beta chain, while the remainder of the serine residue undergoes an oxidative deamination to produce ammonia and the pyruvoyl group blocking the N-terminus of the alpha chain.

It carries out the reaction L-arginine + H(+) = agmatine + CO2. Its pathway is amine and polyamine biosynthesis; agmatine biosynthesis; agmatine from L-arginine: step 1/1. Functionally, specifically catalyzes the decarboxylation of L-arginine to agmatine. Has no S-adenosylmethionine decarboxylase (AdoMetDC) activity. The polypeptide is Arginine decarboxylase proenzyme (Hyperthermus butylicus (strain DSM 5456 / JCM 9403 / PLM1-5)).